We begin with the raw amino-acid sequence, 709 residues long: Rho guanine nucleotide exchange factor 16 (709 aa).

Ala2 carries the post-translational modification N-acetylalanine. Residues Ser6, Ser41, and Ser107 each carry the phosphoserine modification. The segment at 22–70 (ELRLDAGGNPASGLPMVRGSPRVRDDAAFQPQVPAPPQPRPPGHEEPWP) is disordered. Positions 114–146 (SREAARRDPKLLPAPSFSLDDMDVDKDPGGMLR) are disordered. Ser174, Ser191, and Ser208 each carry phosphoserine. Residues 180 to 246 (LAEEPSQPHT…ESSSPEGTQK (67 aa)) form a disordered region. Over residues 191–207 (SPAKNKKTLGRKRGHKG) the composition is skewed to basic residues. A Phosphothreonine modification is found at Thr226. 3 positions are modified to phosphoserine: Ser227, Ser230, and Ser240. The interval 275–481 (LDQLSTEERK…MERMEQMYTL (207 aa)) is required for RHOG activation and mediates interaction with EPHA2. In terms of domain architecture, DH spans 284–468 (KRQEAMFEIL…SKLVRQCNEG (185 aa)). In terms of domain architecture, PH spans 501–620 (WLLKRGELFL…WIVALTHSER (120 aa)). In terms of domain architecture, SH3 spans 629-689 (GDLPQVEITK…PEDFARFITS (61 aa)). Residues 707 to 709 (TDV) carry the PDZ-binding motif motif.

As to quaternary structure, interacts with ELMO2, EPHA2, RAC1 and RHOG; mediates activation of RAC1 by EPHA2. Interacts with TAX1BP3 (via PDZ domain). May interact with CDC42; stimulated by HPV16 E6.

It localises to the cytoplasm. Its function is as follows. Guanyl-nucleotide exchange factor of the RHOG GTPase stimulating the exchange of RHOG-associated GDP for GTP. May play a role in chemotactic cell migration by mediating the activation of RAC1 by EPHA2. May also activate CDC42 and mediate activation of CDC42 by the viral protein HPV16 E6. This is Rho guanine nucleotide exchange factor 16 (ARHGEF16) from Homo sapiens (Human).